Consider the following 159-residue polypeptide: Cyclic pyranopterin monophosphate synthase (159 aa).

Substrate is bound by residues 75 to 77 (LCH) and 113 to 114 (ME). Asp-128 is a catalytic residue.

Belongs to the MoaC family. In terms of assembly, homohexamer; trimer of dimers.

The catalysed reaction is (8S)-3',8-cyclo-7,8-dihydroguanosine 5'-triphosphate = cyclic pyranopterin phosphate + diphosphate. It participates in cofactor biosynthesis; molybdopterin biosynthesis. Functionally, catalyzes the conversion of (8S)-3',8-cyclo-7,8-dihydroguanosine 5'-triphosphate to cyclic pyranopterin monophosphate (cPMP). In Yersinia pseudotuberculosis serotype O:1b (strain IP 31758), this protein is Cyclic pyranopterin monophosphate synthase.